A 293-amino-acid chain; its full sequence is Urease accessory protein UreD 2 (293 aa).

It belongs to the UreD family. UreD, UreF and UreG form a complex that acts as a GTP-hydrolysis-dependent molecular chaperone, activating the urease apoprotein by helping to assemble the nickel containing metallocenter of UreC. The UreE protein probably delivers the nickel.

Its subcellular location is the cytoplasm. Its function is as follows. Required for maturation of urease via the functional incorporation of the urease nickel metallocenter. The chain is Urease accessory protein UreD 2 from Streptomyces griseus subsp. griseus (strain JCM 4626 / CBS 651.72 / NBRC 13350 / KCC S-0626 / ISP 5235).